The sequence spans 207 residues: Ribonuclease HII (207 aa).

The region spanning 17–207 is the RNase H type-2 domain; the sequence is RIVAGVDEVG…SFKPLAAFVD (191 aa). A divalent metal cation contacts are provided by Asp23, Glu24, and Asp120.

This sequence belongs to the RNase HII family. The cofactor is Mn(2+). Mg(2+) is required as a cofactor.

Its subcellular location is the cytoplasm. It catalyses the reaction Endonucleolytic cleavage to 5'-phosphomonoester.. Endonuclease that specifically degrades the RNA of RNA-DNA hybrids. The chain is Ribonuclease HII from Herpetosiphon aurantiacus (strain ATCC 23779 / DSM 785 / 114-95).